The following is a 286-amino-acid chain: Shikimate dehydrogenase (NADP(+)) (286 aa).

Residues 20–22 (SLS) and Ser67 each bind shikimate. Lys71 serves as the catalytic Proton acceptor. Positions 92 and 107 each coordinate shikimate. NADP(+) contacts are provided by residues 131 to 135 (GGGGA) and Ala230. Tyr232 lines the shikimate pocket. Gly253 is a binding site for NADP(+).

Belongs to the shikimate dehydrogenase family. In terms of assembly, homodimer.

The catalysed reaction is shikimate + NADP(+) = 3-dehydroshikimate + NADPH + H(+). The protein operates within metabolic intermediate biosynthesis; chorismate biosynthesis; chorismate from D-erythrose 4-phosphate and phosphoenolpyruvate: step 4/7. Functionally, involved in the biosynthesis of the chorismate, which leads to the biosynthesis of aromatic amino acids. Catalyzes the reversible NADPH linked reduction of 3-dehydroshikimate (DHSA) to yield shikimate (SA). The polypeptide is Shikimate dehydrogenase (NADP(+)) (Lactococcus lactis subsp. cremoris (strain SK11)).